Reading from the N-terminus, the 198-residue chain is Inner membrane-spanning protein YciB (198 aa).

Transmembrane regions (helical) follow at residues 36-56 (IFSATAMLIISSVVVYGILYI), 67-87 (LTLVACLVFGSLTLAFHSETF), 90-110 (WKAPVVNWLFAVAFAGSHFIG), 133-153 (LNIAWIIFFLFCGAANLYVAF), and 162-182 (FKVFGSLGMTLIFLVGQGIYL).

The protein belongs to the YciB family.

It localises to the cell inner membrane. Functionally, plays a role in cell envelope biogenesis, maintenance of cell envelope integrity and membrane homeostasis. This Pseudomonas syringae pv. tomato (strain ATCC BAA-871 / DC3000) protein is Inner membrane-spanning protein YciB.